Here is a 272-residue protein sequence, read N- to C-terminus: Phosphatidylglycerol--prolipoprotein diacylglyceryl transferase (272 aa).

3 helical membrane passes run 19 to 39 (ISIR…YFLV), 58 to 78 (LNTV…VVFY), and 94 to 114 (WHGG…GLIF). Arg-141 is an a 1,2-diacyl-sn-glycero-3-phospho-(1'-sn-glycerol) binding site. The next 2 helical transmembrane spans lie at 207–227 (GTIL…IENF) and 234–254 (LGFI…MILC).

The protein belongs to the Lgt family.

It localises to the cell inner membrane. It catalyses the reaction L-cysteinyl-[prolipoprotein] + a 1,2-diacyl-sn-glycero-3-phospho-(1'-sn-glycerol) = an S-1,2-diacyl-sn-glyceryl-L-cysteinyl-[prolipoprotein] + sn-glycerol 1-phosphate + H(+). Its pathway is protein modification; lipoprotein biosynthesis (diacylglyceryl transfer). Catalyzes the transfer of the diacylglyceryl group from phosphatidylglycerol to the sulfhydryl group of the N-terminal cysteine of a prolipoprotein, the first step in the formation of mature lipoproteins. This chain is Phosphatidylglycerol--prolipoprotein diacylglyceryl transferase, found in Desulfotalea psychrophila (strain LSv54 / DSM 12343).